A 177-amino-acid chain; its full sequence is Platelet glycoprotein IX (177 aa).

The first 16 residues, 1–16 (MPAWGALFLLWATAEA), serve as a signal peptide directing secretion. Residues 17–51 (TKDCPSPCTCRALETMGLWVDCRGHGLTALPALPA) enclose the LRRNT domain. The Extracellular portion of the chain corresponds to 17-147 (TKDCPSPCTC…QLQASWVRPG (131 aa)). N-linked (GlcNAc...) asparagine glycosylation occurs at Asn60. Residues 60–83 (NNSLQSVPPGAFDHLPQLQTLDVT) form an LRR repeat. The LRRCT domain maps to 85-137 (NPWHCDCSLTYLRLWLEDRTPEALLQVRCASPSLAAHGPLGRLTGYQLGSCGW). A helical transmembrane segment spans residues 148–168 (VLWDVALVAVAALGLALLAGL). Residues 169–177 (LCATTEALD) lie on the Cytoplasmic side of the membrane.

In terms of assembly, two GP-Ib beta are disulfide-linked to one GP-Ib alpha. GP-IX is complexed with the GP-Ib heterodimer via a non covalent linkage.

The protein localises to the membrane. The GPIb-V-IX complex functions as the vWF receptor and mediates vWF-dependent platelet adhesion to blood vessels. The adhesion of platelets to injured vascular surfaces in the arterial circulation is a critical initiating event in hemostasis. GP-IX may provide for membrane insertion and orientation of GP-Ib. This Homo sapiens (Human) protein is Platelet glycoprotein IX (GP9).